Consider the following 1286-residue polypeptide: CLIP-associating protein 2 (1286 aa).

Residues 1–40 are golgi localization; the sequence is MRRLICKRICDYKSFDDEESVDGNRPSSAASAFKVPAPKT. Phosphoserine occurs at positions 14 and 20. The segment at 17–70 is disordered; sequence DEESVDGNRPSSAASAFKVPAPKTPGNPVNSARKPGSAGGPKAGGTSKEGGAGA. Gly residues predominate over residues 53–69; the sequence is SAGGPKAGGTSKEGGAG. Residues 66–317 are TOG 1; the sequence is GGAGAVDEDD…KSLQTYLKSS (252 aa). HEAT repeat units lie at residues 179-214, 215-251, and 256-293; these read HGAE…IRHT, HVPR…EWQT, and RHAA…HFPG. Disordered regions lie at residues 320–350 and 355–374; these read VASL…TANP and GRVS…LQRS. Residues serine 322, serine 333, and serine 336 each carry the phosphoserine modification. Low complexity predominate over residues 322–340; the sequence is SLPQSDRSSSSSQESLNRP. A compositionally biased stretch (polar residues) spans 341 to 350; the sequence is FSSKWSTANP. Phosphoserine is present on residues serine 374, serine 376, and serine 413. A disordered region spans residues 410-473; it reads SYASLEDTSD…GSRSGSPGRV (64 aa). A compositionally biased stretch (basic and acidic residues) spans 417–431; it reads TSDKMDGTASEDGRV. An interaction with microtubules, MAPRE1 and MAPRE3 region spans residues 450 to 565; the sequence is RGRSRTKMVS…GPGYGMSQSS (116 aa). The segment covering 459-473 has biased composition (low complexity); it reads SQSQPGSRSGSPGRV. Serine 461, serine 465, serine 469, serine 484, and serine 495 each carry phosphoserine. The tract at residues 492–566 is disordered; sequence NSASAQKRSK…PGYGMSQSSR (75 aa). Positions 500–503 match the SXIP motif 1; mediates interaction with MAPRE1 and targeting to microtubule plus ends motif; it reads SKIP. The residue at position 513 (serine 513) is a Phosphoserine. The SXIP motif 2; mediates interaction with MAPRE1 and targeting to microtubule plus ends signature appears at 523–526; that stretch reads SRIP. A phosphoserine mark is found at serine 531, serine 535, serine 570, serine 572, serine 581, serine 614, and serine 620. Residues 606 to 616 are compositionally biased toward basic and acidic residues; it reads RYESYGMHSDD. Positions 606-638 are disordered; that stretch reads RYESYGMHSDDDANSDASSACSERSYSSRNGSI. A compositionally biased stretch (low complexity) spans 620–634; it reads SDASSACSERSYSSR. Positions 642–873 are TOG 2; sequence MRQTEDVAEV…TKLLHNHLRN (232 aa). HEAT repeat units lie at residues 702–739 and 764–801; these read KVFS…KMGA and LQFN…QMDP. The residue at position 779 (threonine 779) is a Phosphothreonine. Residues 864–1286 form an interaction with RSN and localization to the Golgi and kinetochores region; sequence TKLLHNHLRN…DPTTDVSGQS (423 aa). Disordered stretches follow at residues 870 to 920 and 944 to 990; these read HLRN…FDYD and SFRS…QPAL. Polar residues-rich tracts occupy residues 872-884 and 893-914; these read RNTG…SMGS and SPAN…TLSP. Residue serine 884 is modified to Phosphoserine. Phosphoserine is present on residues serine 944, serine 947, serine 1005, and serine 1021. The segment covering 947–964 has biased composition (basic and acidic residues); the sequence is SQEDMSEPLKRDPKKEDG. Residues 1009–1286 are required for cortical localization; it reads RDYNPYNYSD…DPTTDVSGQS (278 aa). HEAT repeat units lie at residues 1046–1083, 1090–1127, and 1208–1245; these read LDHS…TQEE, EHFK…HQPA, and LLLP…VIGD.

The protein belongs to the CLASP family. Interacts with microtubules. Interacts with MAPRE1; probably required for targeting to the growing microtubule plus ends. Interacts with CLIP2, ERC1, MAPRE3, PHLDB2 and RSN. The interaction with ERC1 may be mediated by PHLDB2. Interacts with GCC2; recruits CLASP2 to Golgi membranes. Interacts with MACF1. Interacts with SOGA1 and MTCL1. Phosphorylated by GSK3B. Phosphorylation by GSK3B may negatively regulate binding to microtubule lattices in lamella.

It localises to the cytoplasm. Its subcellular location is the cytoskeleton. The protein resides in the microtubule organizing center. The protein localises to the centrosome. It is found in the chromosome. It localises to the centromere. Its subcellular location is the kinetochore. The protein resides in the spindle. The protein localises to the golgi apparatus. It is found in the trans-Golgi network. It localises to the cell membrane. Its subcellular location is the cell projection. The protein resides in the ruffle membrane. The protein localises to the cell cortex. Microtubule plus-end tracking protein that promotes the stabilization of dynamic microtubules. Involved in the nucleation of noncentrosomal microtubules originating from the trans-Golgi network (TGN). Required for the polarization of the cytoplasmic microtubule arrays in migrating cells towards the leading edge of the cell. May act at the cell cortex to enhance the frequency of rescue of depolymerizing microtubules by attaching their plus-ends to cortical platforms composed of ERC1 and PHLDB2. This cortical microtubule stabilizing activity is regulated at least in part by phosphatidylinositol 3-kinase signaling. Also performs a similar stabilizing function at the kinetochore which is essential for the bipolar alignment of chromosomes on the mitotic spindle. Acts as a mediator of ERBB2-dependent stabilization of microtubules at the cell cortex. This Rattus norvegicus (Rat) protein is CLIP-associating protein 2 (Clasp2).